A 176-amino-acid polypeptide reads, in one-letter code: Interleukin-1 receptor antagonist protein (176 aa).

The N-terminal stretch at Met1 to Cys25 is a signal peptide. Residues Cys91 and Cys141 are joined by a disulfide bond. Asn109 is a glycosylation site (N-linked (GlcNAc...) asparagine).

The protein belongs to the IL-1 family.

The protein localises to the secreted. Its function is as follows. Anti-inflammatory antagonist of interleukin-1 family of proinflammatory cytokines such as interleukin-1beta/IL1B and interleukin-1alpha/IL1A. Protects from immune dysregulation and uncontrolled systemic inflammation triggered by IL1 for a range of innate stimulatory agents such as pathogens. The polypeptide is Interleukin-1 receptor antagonist protein (IL1RN) (Canis lupus familiaris (Dog)).